A 379-amino-acid chain; its full sequence is Alkanesulfonate monooxygenase (379 aa).

It belongs to the SsuD family.

It catalyses the reaction an alkanesulfonate + FMNH2 + O2 = an aldehyde + FMN + sulfite + H2O + 2 H(+). Its function is as follows. Catalyzes the desulfonation of aliphatic sulfonates. The chain is Alkanesulfonate monooxygenase from Pseudomonas syringae pv. syringae (strain B728a).